Reading from the N-terminus, the 213-residue chain is Regulatory protein RecX (213 aa).

This sequence belongs to the RecX family.

It localises to the cytoplasm. Functionally, modulates RecA activity. This is Regulatory protein RecX from Clostridium beijerinckii (strain ATCC 51743 / NCIMB 8052) (Clostridium acetobutylicum).